A 399-amino-acid chain; its full sequence is Glucose-1-phosphate adenylyltransferase (399 aa).

Alpha-D-glucose 1-phosphate-binding positions include Tyr-100, Gly-165, 180 to 181 (EK), and Ser-191.

The protein belongs to the bacterial/plant glucose-1-phosphate adenylyltransferase family. In terms of assembly, homotetramer.

It catalyses the reaction alpha-D-glucose 1-phosphate + ATP + H(+) = ADP-alpha-D-glucose + diphosphate. It participates in glycan biosynthesis; glycogen biosynthesis. Its function is as follows. Involved in the biosynthesis of ADP-glucose, a building block required for the elongation reactions to produce glycogen. Catalyzes the reaction between ATP and alpha-D-glucose 1-phosphate (G1P) to produce pyrophosphate and ADP-Glc. This is Glucose-1-phosphate adenylyltransferase from Desulforamulus reducens (strain ATCC BAA-1160 / DSM 100696 / MI-1) (Desulfotomaculum reducens).